Reading from the N-terminus, the 126-residue chain is Large ribosomal subunit protein bL20 (126 aa).

The protein belongs to the bacterial ribosomal protein bL20 family.

Functionally, binds directly to 23S ribosomal RNA and is necessary for the in vitro assembly process of the 50S ribosomal subunit. It is not involved in the protein synthesizing functions of that subunit. The protein is Large ribosomal subunit protein bL20 of Nocardia farcinica (strain IFM 10152).